The primary structure comprises 112 residues: 2Fe-2S ferredoxin (112 aa).

The 2Fe-2S ferredoxin-type domain maps to 5–107; the sequence is IKVTFIINDE…GIKVRLPSAT (103 aa). Residues Cys42, Cys48, Cys51, and Cys88 each coordinate [2Fe-2S] cluster.

This sequence belongs to the adrenodoxin/putidaredoxin family. Requires [2Fe-2S] cluster as cofactor.

Ferredoxin are iron-sulfur proteins that transfer electrons in a wide variety of metabolic reactions. This chain is 2Fe-2S ferredoxin (fdxB), found in Rickettsia prowazekii (strain Madrid E).